A 439-amino-acid polypeptide reads, in one-letter code: 26S proteasome regulatory subunit 4 (439 aa).

Disordered stretches follow at residues 1-48 and 82-104; these read MGQN…AMKL and ERLKPQDEKNEEERSKVDDLRGT. 2 stretches are compositionally biased toward basic and acidic residues: residues 12-25 and 82-102; these read GEKKDDKDKKKKYE and ERLKPQDEKNEEERSKVDDLR. Residue 225 to 232 coordinates ATP; that stretch reads GPPGTGKT.

This sequence belongs to the AAA ATPase family. As to quaternary structure, interacts with PSMD5.

It is found in the cytoplasm. The protein localises to the nucleus. Its function is as follows. The 26S proteasome is involved in the ATP-dependent degradation of ubiquitinated proteins. The regulatory (or ATPase) complex confers ATP dependency and substrate specificity to the 26S complex. The sequence is that of 26S proteasome regulatory subunit 4 (Rpt2) from Drosophila melanogaster (Fruit fly).